Consider the following 298-residue polypeptide: Troponin T, cardiac muscle (298 aa).

Residues 1–70 (MSDIEEVVEE…EAKEAEDGPM (70 aa)) show a composition bias toward acidic residues. Disordered regions lie at residues 1-95 (MSDI…GERV) and 120-219 (FENR…EKKK). Residue S2 is modified to N-acetylserine. At S2 the chain carries Phosphoserine; by CK2. Basic and acidic residues-rich tracts occupy residues 120 to 183 (FENR…DEAR) and 203 to 219 (QTERKSGKRQTEREKKK). T204 is modified (phosphothreonine; by PKC/PRKCA). Phosphoserine; by PKC/PRKCA is present on S208. The residue at position 213 (T213) is a Phosphothreonine; by PKC/PRKCA and RAF1. At T294 the chain carries Phosphothreonine; by PKC/PRKCA.

The protein belongs to the troponin T family. Post-translationally, phosphorylation at Thr-213 by PRKCA induces significant reduction in myofilament calcium sensitivity and actomyosin ATPase activity. Heart. The fetal heart shows a greater expression in the atrium than in the ventricle, while the adult heart shows a greater expression in the ventricle than in the atrium. Isoform 6 predominates in normal adult heart. Isoforms 1, 7 and 8 are expressed in fetal heart. Isoform 7 is also expressed in failing adult heart.

Its function is as follows. Troponin T is the tropomyosin-binding subunit of troponin, the thin filament regulatory complex which confers calcium-sensitivity to striated muscle actomyosin ATPase activity. This Homo sapiens (Human) protein is Troponin T, cardiac muscle (TNNT2).